The sequence spans 242 residues: Small ribosomal subunit protein uS2 (242 aa).

This sequence belongs to the universal ribosomal protein uS2 family.

This Aliivibrio fischeri (strain ATCC 700601 / ES114) (Vibrio fischeri) protein is Small ribosomal subunit protein uS2.